The sequence spans 349 residues: 3'-5' exoribonuclease 1 (349 aa).

Basic and acidic residues-rich tracts occupy residues 1 to 10 and 22 to 35; these read MEDPQSKEPA and PRPE…RPSP. Residues 1 to 48 form a disordered region; sequence MEDPQSKEPAGEAVALALLESPRPEGGEEPPRPSPEETQQCKFDGQET. Residues S59 and S62 each carry the phosphoserine modification. The 35-residue stretch at 76-110 folds into the SAP domain; it reads INRMSKEELRAKLSEFKLETRGVKDVLKKRLKNYY. One can recognise an Exonuclease domain in the interval 130–306; it reads ICIIDFEATC…DDSKNIARIA (177 aa). Positions 134 and 136 each coordinate Mg(2+). E136 functions as the Proton acceptor in the catalytic mechanism. E136 and A137 together coordinate AMP. Mg(2+) is bound at residue D234. H293 (proton acceptor) is an active-site residue. Position 293 (H293) interacts with AMP. Residue D298 coordinates Mg(2+).

As to quaternary structure, identified in a histone pre-mRNA complex, at least composed of ERI1, LSM11, SLBP, SNRPB, SYNCRIP and YBX1. Interacts in a cooperative manner with SLBP to the mature 3'-end of histone mRNAs. Binds to 40S and 60S ribosomal subunits and to 80S assembled ribosomes. Found in a ternary complex with SLBP and the stem-loop structure of the 3'-end of histone mRNAs. Mg(2+) is required as a cofactor.

It is found in the cytoplasm. The protein resides in the nucleus. The protein localises to the nucleolus. It carries out the reaction Exonucleolytic cleavage in the 3'- to 5'-direction to yield nucleoside 5'-phosphates.. Its activity is regulated as follows. Although it can bind simultaneously with SLBP to the 3'-end of histone mRNA, the presence of SLBP prevents the exonuclease activity. RNA exonuclease that binds to the 3'-end of histone mRNAs and degrades them, suggesting that it plays an essential role in histone mRNA decay after replication. A 2' and 3'-hydroxyl groups at the last nucleotide of the histone 3'-end is required for efficient 3'-end histone mRNA exonuclease activity and degradation of RNA substrates. Also able to degrade the 3'-overhangs of short interfering RNAs (siRNAs) in vitro, suggesting a possible role as regulator of RNA interference (RNAi). Required for binding the 5'-ACCCA-3' sequence present in stem-loop structure. Able to bind other mRNAs. Required for 5.8S rRNA 3'-end processing. Also binds to 5.8s ribosomal RNA. Binds with high affinity to the stem-loop structure of replication-dependent histone pre-mRNAs. In vitro, does not have sequence specificity. In vitro, has weak DNA exonuclease activity. In vitro, shows biphasic kinetics such that there is rapid hydrolysis of the last three unpaired RNA nucleotides in the 39 flanking sequence followed by a much slower cleavage through the stem that occurs over a longer incubation period in the order of hours. ERI1-mediated RNA metabolism plays a key role in chondrogenesis. This is 3'-5' exoribonuclease 1 from Homo sapiens (Human).